The sequence spans 899 residues: Linoleate 13S-lipoxygenase 2-1, chloroplastic (899 aa).

A chloroplast-targeting transit peptide spans 1-40 (MLKPQLQQSSQSTKALIPSWNTNPLFLASFPINILNKNFR). The 123-residue stretch at 78-200 (VQKQVNLNLS…DNPDKRIFFT (123 aa)) folds into the PLAT domain. The Lipoxygenase domain maps to 203-899 (SYLPSQTPSG…GKGVPYSISI (697 aa)). The interval 252-287 (SNNDDAKRPVLGGKELPYPRRCKTGRPRSKKDPLSE) is disordered. Residues 271–280 (RRCKTGRPRS) show a composition bias toward basic residues. Residues His557, His562, His749, Asn753, and Ile899 each coordinate Fe cation.

The protein belongs to the lipoxygenase family. As to quaternary structure, monomer. Requires Fe cation as cofactor. Expressed in leaves and floral buds.

It is found in the plastid. The protein resides in the chloroplast stroma. It localises to the chloroplast thylakoid. The catalysed reaction is (9Z,12Z)-octadecadienoate + O2 = (13S)-hydroperoxy-(9Z,11E)-octadecadienoate. It catalyses the reaction (9Z,12Z,15Z)-octadecatrienoate + O2 = (13S)-hydroperoxy-(9Z,11E,15Z)-octadecatrienoate. It participates in lipid metabolism; oxylipin biosynthesis. Functionally, plant lipoxygenase involved in a number of diverse aspects of plant physiology including growth and development, pest resistance, and senescence. May not be involved in the bulk production of jasmonate upon wounding. Catalyzes the hydroperoxidation of lipids containing a cis,cis-1,4-pentadiene structure. Linolenic acid is the preferred substrate, before linoleic and arachidonic acids. Also has some activity with phosphatidylglycerol, but not with galactolipids. This is Linoleate 13S-lipoxygenase 2-1, chloroplastic from Solanum tuberosum (Potato).